The following is a 168-amino-acid chain: DNA damage-inducible transcript 3 protein (168 aa).

The segment at F10 to L18 is interaction with TRIB3. An N-terminal region spans residues F10 to Q26. Residues S14, S15, S30, and S31 each carry the phosphoserine; by CK2 modification. Residues S31 to K141 form a disordered region. Over residues S76 to A90 the composition is skewed to low complexity. Residues S78 and S81 each carry the phosphoserine; by MAPK14 modification. One can recognise a bZIP domain in the interval Q98–R161. Residues R100–K129 form a basic motif region. Residues R118–K141 are compositionally biased toward basic and acidic residues. The interval L133–L147 is leucine-zipper.

This sequence belongs to the bZIP family. Heterodimer. Interacts with TCF7L2/TCF4, EP300/P300, HDAC1, HDAC5 and HDAC6. Interacts with TRIB3 which blocks its association with EP300/P300. Interacts with FOXO3, CEBPB and ATF4. Ubiquitinated, leading to its degradation by the proteasome. Post-translationally, phosphorylation at serine residues by MAPK14 enhances its transcriptional activation activity while phosphorylation at serine residues by CK2 inhibits its transcriptional activation activity.

The protein resides in the cytoplasm. The protein localises to the nucleus. Functionally, multifunctional transcription factor in ER stress response. Plays an essential role in the response to a wide variety of cell stresses and induces cell cycle arrest and apoptosis in response to ER stress. Plays a dual role both as an inhibitor of CCAAT/enhancer-binding protein (C/EBP) function and as an activator of other genes. Acts as a dominant-negative regulator of C/EBP-induced transcription: dimerizes with members of the C/EBP family, impairs their association with C/EBP binding sites in the promoter regions, and inhibits the expression of C/EBP regulated genes. Positively regulates the transcription of TRIB3, IL6, IL8, IL23, TNFRSF10B/DR5, PPP1R15A/GADD34, BBC3/PUMA, BCL2L11/BIM and ERO1L. Negatively regulates; expression of BCL2 and MYOD1, ATF4-dependent transcriptional activation of asparagine synthetase (ASNS), CEBPA-dependent transcriptional activation of hepcidin (HAMP) and CEBPB-mediated expression of peroxisome proliferator-activated receptor gamma (PPARG). Inhibits the canonical Wnt signaling pathway by binding to TCF7L2/TCF4, impairing its DNA-binding properties and repressing its transcriptional activity. Plays a regulatory role in the inflammatory response through the induction of caspase-11 (CASP4/CASP11) which induces the activation of caspase-1 (CASP1) and both these caspases increase the activation of pro-IL1B to mature IL1B which is involved in the inflammatory response. The sequence is that of DNA damage-inducible transcript 3 protein (DDIT3) from Bos taurus (Bovine).